Consider the following 93-residue polypeptide: Parbolysin P3 (93 aa).

Cystine bridges form between Cys16-Cys37, Cys22-Cys33, and Cys47-Cys60.

The protein belongs to the worm cytolysin family. In terms of tissue distribution, localized within the skin and proboscis and are most readily isolated from body mucus secretions.

It localises to the secreted. Its function is as follows. Cytolysin that shows hemolytic activity (on bovine erythrocytes, HC(50)=5.75 mg/ml). This hemolytic activity is completely inhibited by small unilamelar vesicles composed of PC/PG, PC/PI and PC/PS in 1:1 molar ratios (with at least 100 mg/ml concentration). In Parborlasia corrugatus (Antarctic nemertean worm), this protein is Parbolysin P3.